We begin with the raw amino-acid sequence, 294 residues long: Large ribosomal subunit protein uL2 (294 aa).

2 disordered regions span residues 1 to 37 and 228 to 294; these read MGIRTLRPYTPSTRHMTVSDFEELSRDENGKRPRPEK and GSVM…RAAQ. Over residues 23–37 the composition is skewed to basic and acidic residues; that stretch reads ELSRDENGKRPRPEK. The span at 264 to 285 shows a compositional bias: basic residues; the sequence is KTRKRNKPSNKFIVRGRRRGGR.

It belongs to the universal ribosomal protein uL2 family. Part of the 50S ribosomal subunit. Forms a bridge to the 30S subunit in the 70S ribosome.

One of the primary rRNA binding proteins. Required for association of the 30S and 50S subunits to form the 70S ribosome, for tRNA binding and peptide bond formation. It has been suggested to have peptidyltransferase activity; this is somewhat controversial. Makes several contacts with the 16S rRNA in the 70S ribosome. The sequence is that of Large ribosomal subunit protein uL2 from Synechococcus sp. (strain JA-2-3B'a(2-13)) (Cyanobacteria bacterium Yellowstone B-Prime).